Here is a 127-residue protein sequence, read N- to C-terminus: Gonadotropin subunit beta-1 (127 aa).

The first 22 residues, Met1 to Ser22, serve as a signal peptide directing secretion. 6 cysteine pairs are disulfide-bonded: Cys23–Cys71, Cys37–Cys86, Cys40–Cys124, Cys48–Cys102, Cys52–Cys104, and Cys107–Cys114. Asn27 and Asn44 each carry an N-linked (GlcNAc...) asparagine glycan.

Belongs to the glycoprotein hormones subunit beta family. Heterodimer of an alpha and a beta chain.

It localises to the secreted. Functionally, involved in gametogenesis and steroidogenesis. This chain is Gonadotropin subunit beta-1 (cgba), found in Anguilla japonica (Japanese eel).